The chain runs to 249 residues: MTALKTTETIPLYTIRDLPIHGFRNMAQFVDYLFAGERVETGTLVAINAEKVLTAEKDVALRTLLDRAEYKYADGISIVRSIRRKYPQADVTRIAGADLWEALMERAGKEGTPVFLVGGKPDVLAQTEAKLRAQWNVNIVGSQDGYFAPEQRDALFERIRASGAQFVTVAMGSPRQEILMRDCRHHYPDALYMGVGGTYDVFTGHVKRAPLVWQNLGLEWLYRLLSQPSRIFRQFKLLKYVAYHYSGRL.

It belongs to the glycosyltransferase 26 family.

The catalysed reaction is UDP-N-acetyl-alpha-D-mannosaminouronate + N-acetyl-alpha-D-glucosaminyl-di-trans,octa-cis-undecaprenyl diphosphate = beta-D-ManNAcA-(1-&gt;4)-alpha-D-GlcNAc-di-trans,octa-cis-undecaprenyl diphosphate + UDP + H(+). Its pathway is bacterial outer membrane biogenesis; enterobacterial common antigen biosynthesis. Catalyzes the synthesis of Und-PP-GlcNAc-ManNAcA (Lipid II), the second lipid-linked intermediate involved in enterobacterial common antigen (ECA) synthesis. This is UDP-N-acetyl-D-mannosaminuronic acid transferase from Pectobacterium carotovorum subsp. carotovorum (strain PC1).